A 759-amino-acid polypeptide reads, in one-letter code: Na(+)/H(+) exchanger beta (759 aa).

Residues 1–14 (MPAFSCAFPGCRRD) lie on the Cytoplasmic side of the membrane. Residues 15 to 34 (LLVIVLVVFVGIGLPIEASA) traverse the membrane as a helical segment. Residues 35 to 75 (PAYQSHGTEGSHLTNITNTKKAFPVLAVNYEHVRKPFEIAL) lie on the Extracellular side of the membrane. N-linked (GlcNAc...) asparagine glycosylation is present at Asn-49. A helical transmembrane segment spans residues 76 to 95 (WILLALLMKLGFHLIPRLSA). The Cytoplasmic portion of the chain corresponds to 96-97 (VV). A helical transmembrane segment spans residues 98-117 (PESCLLIVVGLLVGGLIKVI). The Extracellular portion of the chain corresponds to 118–122 (GEEPP). Residues 123-142 (VLDSQLFFLCLLPPIILDAG) form a helical membrane-spanning segment. At 143–149 (YFLPIRP) the chain is on the cytoplasmic side. A helical transmembrane segment spans residues 150–169 (FTENVGTILVFAVIGTLWNA). Residues 170 to 195 (FFMGGLLYALCQIESVGLSGVDLLAC) are Extracellular-facing. A helical transmembrane segment spans residues 196–214 (LLFGSIVSAVDPVAVLAVF). The Cytoplasmic portion of the chain corresponds to 215 to 225 (EEIHINELVHI). A helical transmembrane segment spans residues 226–244 (LVFGESLLNDAVTVVLYNL). Residues 245 to 261 (FEEFSKVGTVTVLDVFL) are Extracellular-facing. The chain crosses the membrane as a helical span at residues 262–282 (GVVCFFVVSLGGVLVGAIYGF). Over 283-311 (LAAFTSRFTSHTRVIEPLFVFLYSYMAYL) the chain is Cytoplasmic. The helical transmembrane segment at 312–330 (SSEMFHLSGIMALIACGVV) threads the bilayer. Residues 331–352 (MRPYVEANISHKSYTTIKYFLK) lie on the Extracellular side of the membrane. The N-linked (GlcNAc...) asparagine glycan is linked to Asn-338. Residues 353 to 372 (MWSSVSETLIFIFLGVSTVA) traverse the membrane as a helical segment. Residues 373–376 (GPHA) are Cytoplasmic-facing. The chain crosses the membrane as a helical span at residues 377-398 (WNWTFVITTVILCLVSRVLGVI). At 399–446 (GLTFIINKFRIVKLTKKDQFIVAYGGLRGAIAFSLGYLLSNSHQMRNL) the chain is on the extracellular side. Residues 447 to 467 (FLTAIITVIFFTVFVQGMTIR) traverse the membrane as a helical segment. Residues 468–759 (PLVELLAVKK…KEDDDPFMSC (292 aa)) lie on the Cytoplasmic side of the membrane. 2 positions are modified to phosphoserine; by PKA: Ser-641 and Ser-648. Residues 681–759 (FPTVHFEQPS…KEDDDPFMSC (79 aa)) form a disordered region. The span at 707–719 (VPKRPSLKADIEG) shows a compositional bias: basic and acidic residues.

The protein belongs to the monovalent cation:proton antiporter 1 (CPA1) transporter (TC 2.A.36) family. Activated by cAMP, protein kinase A and protein kinase C.

The protein localises to the basolateral cell membrane. Its function is as follows. Involved in pH regulation to eliminate acids generated by active metabolism or to counter adverse environmental conditions. Major proton extruding system driven by the inward sodium ion chemical gradient. This chain is Na(+)/H(+) exchanger beta, found in Oncorhynchus mykiss (Rainbow trout).